A 374-amino-acid polypeptide reads, in one-letter code: MAKRDYYEVLGVAKNATDDELKKAYRKLAMKHHPDRNPDNKDAEEKFKEIKEAYEVLGDEQKRAAYDRYGHAGVDPNAAGMGGAGMGGGFADAFGDIFGEIFGGAGGRRGGAQVYRGADLKYALEITLEQAAHGFDTEIRVPSWEHCDTCHGSGAKPGTSPKTCRTCGGSGAVRMQQGFFSVQQTCPTCHGTGKEITDPCPSCDGVGRIRRNKTLQVKIPAGIDDGMRIRSSGNGEPGINGGPSGDLYVEIHIKPHKIFQRDGDDLHCELTIPFTTAALGGELQVPTLGGKAEISIPEGTQSGKTFRLRGKGIRGVRASYPGDLYCHVAVETPVRLSDEQKAILRQFETSLNDGGDRHSPQSKSWTDRVKEFFS.

The J domain maps to 5–70; the sequence is DYYEVLGVAK…QKRAAYDRYG (66 aa). The CR-type zinc-finger motif lies at 134 to 212; it reads GFDTEIRVPS…CDGVGRIRRN (79 aa). The Zn(2+) site is built by C147, C150, C164, C167, C186, C189, C200, and C203. 4 CXXCXGXG motif repeats span residues 147–154, 164–171, 186–193, and 200–207; these read CDTCHGSG, CRTCGGSG, CPTCHGTG, and CPSCDGVG.

It belongs to the DnaJ family. In terms of assembly, homodimer. It depends on Zn(2+) as a cofactor.

Its subcellular location is the cytoplasm. Participates actively in the response to hyperosmotic and heat shock by preventing the aggregation of stress-denatured proteins and by disaggregating proteins, also in an autonomous, DnaK-independent fashion. Unfolded proteins bind initially to DnaJ; upon interaction with the DnaJ-bound protein, DnaK hydrolyzes its bound ATP, resulting in the formation of a stable complex. GrpE releases ADP from DnaK; ATP binding to DnaK triggers the release of the substrate protein, thus completing the reaction cycle. Several rounds of ATP-dependent interactions between DnaJ, DnaK and GrpE are required for fully efficient folding. Also involved, together with DnaK and GrpE, in the DNA replication of plasmids through activation of initiation proteins. In Bordetella petrii (strain ATCC BAA-461 / DSM 12804 / CCUG 43448), this protein is Chaperone protein DnaJ.